A 365-amino-acid chain; its full sequence is tRNA/tmRNA (uracil-C(5))-methyltransferase (365 aa).

Glutamine 189, tyrosine 217, asparagine 222, glutamate 238, and aspartate 298 together coordinate S-adenosyl-L-methionine. Cysteine 323 acts as the Nucleophile in catalysis. Glutamate 357 acts as the Proton acceptor in catalysis.

It belongs to the class I-like SAM-binding methyltransferase superfamily. RNA M5U methyltransferase family. TrmA subfamily.

It catalyses the reaction uridine(54) in tRNA + S-adenosyl-L-methionine = 5-methyluridine(54) in tRNA + S-adenosyl-L-homocysteine + H(+). The enzyme catalyses uridine(341) in tmRNA + S-adenosyl-L-methionine = 5-methyluridine(341) in tmRNA + S-adenosyl-L-homocysteine + H(+). In terms of biological role, dual-specificity methyltransferase that catalyzes the formation of 5-methyluridine at position 54 (m5U54) in all tRNAs, and that of position 341 (m5U341) in tmRNA (transfer-mRNA). The polypeptide is tRNA/tmRNA (uracil-C(5))-methyltransferase (Pasteurella multocida (strain Pm70)).